The primary structure comprises 271 residues: Phosphate import ATP-binding protein PstB (271 aa).

In terms of domain architecture, ABC transporter spans 24-266 (MIGQDVSVYY…PDDPRTQDYI (243 aa)). 56-63 (GPSGCGKS) contributes to the ATP binding site.

It belongs to the ABC transporter superfamily. Phosphate importer (TC 3.A.1.7) family. The complex is composed of two ATP-binding proteins (PstB), two transmembrane proteins (PstC and PstA) and a solute-binding protein (PstS).

It localises to the cell inner membrane. The enzyme catalyses phosphate(out) + ATP + H2O = ADP + 2 phosphate(in) + H(+). Functionally, part of the ABC transporter complex PstSACB involved in phosphate import. Responsible for energy coupling to the transport system. The polypeptide is Phosphate import ATP-binding protein PstB (Rhizobium etli (strain ATCC 51251 / DSM 11541 / JCM 21823 / NBRC 15573 / CFN 42)).